Here is a 348-residue protein sequence, read N- to C-terminus: Phosphate acyltransferase (348 aa).

It belongs to the PlsX family. Homodimer. Probably interacts with PlsY.

It localises to the cytoplasm. The catalysed reaction is a fatty acyl-[ACP] + phosphate = an acyl phosphate + holo-[ACP]. It participates in lipid metabolism; phospholipid metabolism. Functionally, catalyzes the reversible formation of acyl-phosphate (acyl-PO(4)) from acyl-[acyl-carrier-protein] (acyl-ACP). This enzyme utilizes acyl-ACP as fatty acyl donor, but not acyl-CoA. In Nitrosomonas europaea (strain ATCC 19718 / CIP 103999 / KCTC 2705 / NBRC 14298), this protein is Phosphate acyltransferase.